Here is a 130-residue protein sequence, read N- to C-terminus: Small ribosomal subunit protein uS8 (130 aa).

It belongs to the universal ribosomal protein uS8 family.

The chain is Small ribosomal subunit protein uS8 (rps22) from Agaricus bisporus (White button mushroom).